The primary structure comprises 873 residues: DNA mismatch repair protein MutS (873 aa).

An ATP-binding site is contributed by 625–632 (GPNMGGKS).

It belongs to the DNA mismatch repair MutS family.

Its function is as follows. This protein is involved in the repair of mismatches in DNA. It is possible that it carries out the mismatch recognition step. This protein has a weak ATPase activity. The sequence is that of DNA mismatch repair protein MutS from Xanthomonas euvesicatoria pv. vesicatoria (strain 85-10) (Xanthomonas campestris pv. vesicatoria).